The chain runs to 309 residues: NADH-cytochrome b5 reductase 1 (309 aa).

A helical membrane pass occupies residues 29–49 (EFVPYAVALTAVLAGFKLFTG). The 106-residue stretch at 60 to 165 (TEFQEFVLKE…RGPKGAMVYT (106 aa)) folds into the FAD-binding FR-type domain. FAD-binding positions include 145–160 (TTLK…GPKG) and 171–208 (HIGM…KVDL).

The protein belongs to the flavoprotein pyridine nucleotide cytochrome reductase family. Monomer. Component of the 2-(3-amino-3-carboxypropyl)histidine synthase complex composed of dph1, dph2, dph3 and a NADH-dependent reductase, predominantly cbr1. FAD serves as cofactor.

It localises to the mitochondrion outer membrane. The catalysed reaction is 2 Fe(III)-[cytochrome b5] + NADH = 2 Fe(II)-[cytochrome b5] + NAD(+) + H(+). The enzyme catalyses 2 Fe(3+)-[Dph3] + NADH = 2 Fe(2+)-[Dph3] + NAD(+) + H(+). The protein operates within protein modification; peptidyl-diphthamide biosynthesis. Its function is as follows. NADH-dependent reductase for dph3 and cytochrome b5. Required for the first step of diphthamide biosynthesis, a post-translational modification of histidine which occurs in elongation factor 2. Dph1 and dph2 transfer a 3-amino-3-carboxypropyl (ACP) group from S-adenosyl-L-methionine (SAM) to a histidine residue, the reaction is assisted by a reduction system comprising dph3 and a NADH-dependent reductase, predominantly cbr1. By reducing dph3, also involved in the formation of the tRNA wobble base modification mcm5s 2U (5-methoxycarbonylmethyl-2-thiouridine), mediated by the elongator complex. The cytochrome b5/NADH cytochrome b5 reductase electron transfer system supports the catalytic activity of several sterol biosynthetic enzymes. This is NADH-cytochrome b5 reductase 1 (cbr1) from Aspergillus clavatus (strain ATCC 1007 / CBS 513.65 / DSM 816 / NCTC 3887 / NRRL 1 / QM 1276 / 107).